Consider the following 283-residue polypeptide: Gap junction beta-1 protein (283 aa).

Residues 1–22 lie on the Cytoplasmic side of the membrane; that stretch reads MNWTGLYTLLSGVNRHSTAIGR. Residues 23–45 form a helical membrane-spanning segment; that stretch reads VWLSVIFIFRIMVLVVAAESVWG. Topologically, residues 46-75 are extracellular; that stretch reads DEKSSFICNTLQPGCNSVCYDHFFPISHVR. The chain crosses the membrane as a helical span at residues 76-95; that stretch reads LWSLQLILVSTPALLVAMHV. The Cytoplasmic segment spans residues 96 to 130; the sequence is AHQQHIEKKMLRLEGHGDPIHLEEVKRHKVHISGT. A helical transmembrane segment spans residues 131 to 153; that stretch reads LWWTYVISVVFRLLFEAAFMYVF. Residues 154-191 lie on the Extracellular side of the membrane; that stretch reads YLLYPGYAMVRLVKCDAYPCPNTVDCFVSRPTEKTVFT. A helical transmembrane segment spans residues 192–214; the sequence is VFMLAASGICIILNVAEVVYLIV. The Cytoplasmic portion of the chain corresponds to 215–283; sequence RACARRAQRR…AEKSDRCSAC (69 aa). Phosphoserine occurs at positions 233, 258, 266, and 277.

This sequence belongs to the connexin family. Beta-type (group I) subfamily. As to quaternary structure, a connexon is composed of a hexamer of connexins. Interacts with CNST.

The protein localises to the cell membrane. It localises to the cell junction. Its subcellular location is the gap junction. In terms of biological role, one gap junction consists of a cluster of closely packed pairs of transmembrane channels, the connexons, through which materials of low MW diffuse from one cell to a neighboring cell. This chain is Gap junction beta-1 protein (GJB1), found in Equus caballus (Horse).